The chain runs to 248 residues: Flavodoxin/ferredoxin--NADP reductase (248 aa).

The FAD-binding FR-type domain occupies 2 to 101 (ADWVTGKVTK…SEAAGFFVLD (100 aa)). Residue D17 participates in NADP(+) binding. Residues 50-53 (RAYS), Y66, 74-76 (KLS), and T116 each bind FAD. NADP(+) is bound by residues 143–144 (AR), 173–174 (SR), R184, 214–216 (NPQ), and D220. An FAD-binding site is contributed by 247 to 248 (YW).

The protein belongs to the ferredoxin--NADP reductase type 1 family. Monomer. It depends on FAD as a cofactor.

It is found in the cytoplasm. It catalyses the reaction 2 reduced [2Fe-2S]-[ferredoxin] + NADP(+) + H(+) = 2 oxidized [2Fe-2S]-[ferredoxin] + NADPH. The enzyme catalyses reduced [flavodoxin] + NADP(+) = oxidized [flavodoxin] + NADPH + 2 H(+). In terms of biological role, transports electrons between flavodoxin or ferredoxin and NADPH. Reduces flavodoxin 1, flavodoxin 2 and ferredoxin, ferredoxin being the kinetically and thermodynamically preferred partner. Required for the activation of several enzymes such as pyruvate formate-lyase, anaerobic ribonucleotide reductase and cobalamin-dependent methionine synthase. This chain is Flavodoxin/ferredoxin--NADP reductase, found in Escherichia coli (strain K12).